The primary structure comprises 391 residues: Multidrug resistance protein MdtL (391 aa).

The Cytoplasmic segment spans residues 1–3; it reads MSR. Residues 4-24 form a helical membrane-spanning segment; sequence FLICSFALVLLYPAGIDMYLV. Residues 25–41 are Periplasmic-facing; the sequence is GLPRIAADLNASEAQLH. Residues 42–62 form a helical membrane-spanning segment; that stretch reads IAFSVYLAGMAAAMLFAGKVA. Topologically, residues 63-68 are cytoplasmic; sequence DRSGRK. A helical transmembrane segment spans residues 69–89; the sequence is PVAIPGAALFIIASVFCSLAE. At 90 to 92 the chain is on the periplasmic side; the sequence is TST. Residues 93-113 traverse the membrane as a helical segment; the sequence is LFLAGRFLQGLGAGCCYVVAF. The Cytoplasmic segment spans residues 114–130; the sequence is AILRDTLDDRRRAKVLS. The helical transmembrane segment at 131-151 threads the bilayer; that stretch reads LLNGITCIIPVLAPVLGHLIM. Topologically, residues 152–157 are periplasmic; that stretch reads LKFPWQ. A helical membrane pass occupies residues 158-178; sequence SLFWTMAIMGIAVLMLSLFIL. Over 179–198 the chain is Cytoplasmic; the sequence is KETRPAAPAASDKSRENSES. Residues 199–221 traverse the membrane as a helical segment; that stretch reads LLNRFFLSRVVITTLSVSVILTF. Over 222-244 the chain is Periplasmic; the sequence is VNTSPVLLMEIMGFERGEYATIM. The helical transmembrane segment at 245–265 threads the bilayer; that stretch reads ALTAGVSMTVSFSTPFALGIF. Residues 266 to 268 lie on the Cytoplasmic side of the membrane; it reads KPR. The chain crosses the membrane as a helical span at residues 269–289; sequence TLMITSQVLFLAAGITLAVSP. The Periplasmic portion of the chain corresponds to 290 to 292; it reads SHA. Residues 293 to 313 form a helical membrane-spanning segment; it reads ISLFGITLICAGFSVGFGVAM. The Cytoplasmic portion of the chain corresponds to 314-330; sequence SQALGPFSLRAGVASST. The chain crosses the membrane as a helical span at residues 331–351; the sequence is LGIAQVCGSSLWIWLAAVVGI. The Periplasmic portion of the chain corresponds to 352–355; it reads GAWN. The chain crosses the membrane as a helical span at residues 356 to 376; that stretch reads MLIGILIACSIVSLLLIMFVA. Over 377–391 the chain is Cytoplasmic; sequence PGRPVAAHEEIHHHA.

Belongs to the major facilitator superfamily. DHA1 family. MdtL (TC 2.A.1.2.22) subfamily.

The protein resides in the cell inner membrane. This Shigella dysenteriae serotype 1 (strain Sd197) protein is Multidrug resistance protein MdtL.